A 59-amino-acid polypeptide reads, in one-letter code: Large ribosomal subunit protein bL32 (59 aa).

The protein belongs to the bacterial ribosomal protein bL32 family.

This is Large ribosomal subunit protein bL32 from Lactiplantibacillus plantarum (strain ATCC BAA-793 / NCIMB 8826 / WCFS1) (Lactobacillus plantarum).